Consider the following 1032-residue polypeptide: GPI inositol-deacylase (1032 aa).

The N-linked (GlcNAc...) asparagine glycan is linked to N12. Residues 15-35 (ILTLVSFFGLVLFYLTWYLYT) traverse the membrane as a helical segment. S195 is an active-site residue. N-linked (GlcNAc...) asparagine glycans are attached at residues N520 and N555. Transmembrane regions (helical) follow at residues 703 to 723 (LATISFCVSIILLALVFQVKH) and 740 to 760 (ICSPWVFGSILFTLSILTPIM). An N-linked (GlcNAc...) asparagine glycan is attached at N784. Transmembrane regions (helical) follow at residues 805–825 (LWFIGPVFFVMGLGIVSLTFY), 861–880 (WANRRIIGVLFVLLVIPIYM), and 884–903 (FAYVVSCIIQSIQVIKILVA). N907 is a glycosylation site (N-linked (GlcNAc...) asparagine). A helical membrane pass occupies residues 916 to 936 (SLLMLMLWVLPINVPILVVFV). Residues N938 and N942 are each glycosylated (N-linked (GlcNAc...) asparagine). A run of 2 helical transmembrane segments spans residues 943 to 963 (WTTPFSSHHNFLAILPVILLM) and 985 to 1005 (AFLAYYVFYCLVYGIRHTYWI).

The protein belongs to the GPI inositol-deacylase family.

The protein resides in the endoplasmic reticulum membrane. Its function is as follows. Involved in inositol deacylation of GPI-anchored proteins which plays important roles in the quality control and ER-associated degradation of GPI-anchored proteins. The sequence is that of GPI inositol-deacylase (BST1) from Debaryomyces hansenii (strain ATCC 36239 / CBS 767 / BCRC 21394 / JCM 1990 / NBRC 0083 / IGC 2968) (Yeast).